Consider the following 205-residue polypeptide: Recombination protein RecR (205 aa).

The segment at 59–74 (CSVCFHLSAEPVCEVC) adopts a C4-type zinc-finger fold. In terms of domain architecture, Toprim spans 82 to 181 (GTLCVVADSR…KVTRIAFGLP (100 aa)).

This sequence belongs to the RecR family.

In terms of biological role, may play a role in DNA repair. It seems to be involved in an RecBC-independent recombinational process of DNA repair. It may act with RecF and RecO. The polypeptide is Recombination protein RecR (Cyanothece sp. (strain PCC 7425 / ATCC 29141)).